The following is a 511-amino-acid chain: Cytochrome P450 89A9 (511 aa).

Residues 6 to 26 (IIFLIISSLTFSIFLKLIFFF) form a helical; Signal-anchor for type II membrane protein membrane-spanning segment. Cysteine 454 serves as a coordination point for heme.

Belongs to the cytochrome P450 family. It depends on heme as a cofactor.

The protein resides in the endoplasmic reticulum membrane. It carries out the reaction primary fluorescent chlorophyll catabolite + reduced [NADPH--hemoprotein reductase] + O2 = primary fluorescent dioxobilin-type chlorophyll catabolite + formate + oxidized [NADPH--hemoprotein reductase] + 2 H(+). It functions in the pathway porphyrin-containing compound metabolism; chlorophyll degradation. Functionally, involved in the chlorophyll breakdown by its action in nonpolar primary fluorescent chlorophyll catabolite (pFCC) decarbonylation. Involved in the formation of major chlorophyll breakdown products, including non-fluorescent dioxobilin-type chlorophyll catabolites (NDCCs), during leaf senescence. The sequence is that of Cytochrome P450 89A9 from Arabidopsis thaliana (Mouse-ear cress).